A 411-amino-acid polypeptide reads, in one-letter code: Lissencephaly-1 homolog (411 aa).

The 33-residue stretch at 9-41 (QREELNQAIADYLGSNGYADSLETFRKEADLST) folds into the LisH domain. Residues 56–83 (TSVIRLQKKVMELEAKLTEAEKEVIEGA) adopt a coiled-coil conformation. WD repeat units lie at residues 106 to 147 (GHRA…RSLK), 148 to 187 (GHTD…ECIK), 191 to 230 (GHDH…CVKT), 233 to 272 (GHRE…CKVE), 275 to 334 (DHEH…CLLT), 337 to 376 (GHDN…CMKT), and 379 to 411 (AHQH…WECR).

This sequence belongs to the WD repeat LIS1/nudF family.

The protein localises to the cytoplasm. The protein resides in the cytoskeleton. It localises to the microtubule organizing center. Its subcellular location is the centrosome. Positively regulates the activity of the minus-end directed microtubule motor protein dynein. May enhance dynein-mediated microtubule sliding by targeting dynein to the microtubule plus end. Required for several dynein- and microtubule-dependent processes. The chain is Lissencephaly-1 homolog from Drosophila sechellia (Fruit fly).